The following is a 159-amino-acid chain: Nucleotide-binding protein Pmen_0939 (159 aa).

Belongs to the YajQ family.

Its function is as follows. Nucleotide-binding protein. In Ectopseudomonas mendocina (strain ymp) (Pseudomonas mendocina), this protein is Nucleotide-binding protein Pmen_0939.